Consider the following 233-residue polypeptide: MFGKFVLLAVLLVGVNSRYVIIEDPVYYIEDHELPEQWTSSRVRRDAHGAVTLNTDGTSGAVVKVPIAGSDKNIVSAIGSVDLTDRLKVGAATAGLAIDNVNGHGASITDTHIPGFGDKLTAAGKINLIHNDNHDLTANAFATRNMPSIPLVPDFNTVGGGIDYMFKDKIGASASVAHTDLINRNDYSLGGKLNLFKTPDTSVDFNAGWKKFDTPVINSNWEPNFGFSLSKYF.

The signal sequence occupies residues Met-1–Ser-17. Positions Arg-18–Arg-45 are excised as a propeptide.

It belongs to the attacin/sarcotoxin-2 family.

It localises to the secreted. Its function is as follows. Has antibacterial activity against both Gram-positive and Gram-negative bacteria. The sequence is that of Defense protein 3 from Lonomia obliqua (Moth).